The chain runs to 368 residues: tRNA-specific 2-thiouridylase MnmA (368 aa).

ATP is bound by residues 12-19 (AMSGGVDS) and Met-38. Catalysis depends on Cys-110, which acts as the Nucleophile. Residues Cys-110 and Cys-207 are joined by a disulfide bond. Gly-134 lines the ATP pocket. The segment at 157–159 (KDQ) is interaction with tRNA. Cys-207 (cysteine persulfide intermediate) is an active-site residue. An interaction with tRNA region spans residues 312-313 (RY).

This sequence belongs to the MnmA/TRMU family.

The protein resides in the cytoplasm. It carries out the reaction S-sulfanyl-L-cysteinyl-[protein] + uridine(34) in tRNA + AH2 + ATP = 2-thiouridine(34) in tRNA + L-cysteinyl-[protein] + A + AMP + diphosphate + H(+). Functionally, catalyzes the 2-thiolation of uridine at the wobble position (U34) of tRNA, leading to the formation of s(2)U34. This is tRNA-specific 2-thiouridylase MnmA from Geobacter metallireducens (strain ATCC 53774 / DSM 7210 / GS-15).